Here is a 449-residue protein sequence, read N- to C-terminus: Mannan endo-1,6-alpha-mannosidase DCW1 (449 aa).

The first 21 residues, 1–21 (MLVNKVIGLLGVLFATRFTNA), serve as a signal peptide directing secretion. N-linked (GlcNAc...) asparagine glycosylation is found at asparagine 34, asparagine 84, asparagine 109, asparagine 133, asparagine 203, asparagine 225, asparagine 240, asparagine 265, asparagine 281, asparagine 337, asparagine 362, and asparagine 420. The GPI-anchor amidated glycine moiety is linked to residue glycine 428. The propeptide at 429–449 (AGIITAVIGISIVACALWLVF) is removed in mature form.

This sequence belongs to the glycosyl hydrolase 76 family.

It is found in the cell membrane. The enzyme catalyses Random hydrolysis of (1-&gt;6)-alpha-D-mannosidic linkages in unbranched (1-&gt;6)-mannans.. In terms of biological role, required for normal synthesis of the cell wall. The chain is Mannan endo-1,6-alpha-mannosidase DCW1 (DCW1) from Saccharomyces cerevisiae (strain ATCC 204508 / S288c) (Baker's yeast).